A 534-amino-acid chain; its full sequence is Replication factor C large subunit (534 aa).

45 to 52 (GPPGIGKT) contributes to the ATP binding site. Residues 444–463 (KNKKEIKVKTKKDTVEDSSK) show a composition bias toward basic and acidic residues. The tract at residues 444–534 (KNKKEIKVKT…KSRQTTLFDF (91 aa)) is disordered. A compositionally biased stretch (low complexity) spans 488–510 (SSNSTTKNKTESPKNSSKTSSKT). Residues 517 to 527 (TSKKNNKKKSR) show a composition bias toward basic residues.

The protein belongs to the activator 1 small subunits family. RfcL subfamily. In terms of assembly, heteromultimer composed of small subunits (RfcS) and large subunits (RfcL).

In terms of biological role, part of the RFC clamp loader complex which loads the PCNA sliding clamp onto DNA. This is Replication factor C large subunit from Methanosphaera stadtmanae (strain ATCC 43021 / DSM 3091 / JCM 11832 / MCB-3).